A 266-amino-acid chain; its full sequence is Segregation and condensation protein A (266 aa).

Belongs to the ScpA family. Component of a cohesin-like complex composed of ScpA, ScpB and the Smc homodimer, in which ScpA and ScpB bind to the head domain of Smc. The presence of the three proteins is required for the association of the complex with DNA.

It localises to the cytoplasm. Participates in chromosomal partition during cell division. May act via the formation of a condensin-like complex containing Smc and ScpB that pull DNA away from mid-cell into both cell halves. The sequence is that of Segregation and condensation protein A from Coxiella burnetii (strain RSA 493 / Nine Mile phase I).